The primary structure comprises 338 residues: High mobility group B protein 9 (338 aa).

The 92-residue stretch at 38-129 (VKDSSVFWDT…LLFHYEQVHL (92 aa)) folds into the ARID domain. The interval 233–259 (TGRRRRRLGKRRRSRRREDPNYPKPNR) is disordered. Residues 235–247 (RRRRRLGKRRRSR) show a composition bias toward basic residues. A DNA-binding region (HMG box) is located at residues 255 to 322 (PKPNRSGYNF…RYQRELNEYR (68 aa)).

As to expression, predominantly expressed in leaves, flowers and seedlings.

Its subcellular location is the nucleus. Binds preferentially DNA with A/T-rich content. Required for karyogamy during female gametophyte development, when the two polar nuclei fuse to form the diploid central cell nucleus. The chain is High mobility group B protein 9 (HMGB9) from Arabidopsis thaliana (Mouse-ear cress).